Reading from the N-terminus, the 245-residue chain is Ribonuclease PH (245 aa).

Phosphate is bound by residues arginine 86 and 124 to 126 (GTR).

The protein belongs to the RNase PH family. Homohexameric ring arranged as a trimer of dimers.

The enzyme catalyses tRNA(n+1) + phosphate = tRNA(n) + a ribonucleoside 5'-diphosphate. Phosphorolytic 3'-5' exoribonuclease that plays an important role in tRNA 3'-end maturation. Removes nucleotide residues following the 3'-CCA terminus of tRNAs; can also add nucleotides to the ends of RNA molecules by using nucleoside diphosphates as substrates, but this may not be physiologically important. Probably plays a role in initiation of 16S rRNA degradation (leading to ribosome degradation) during starvation. The protein is Ribonuclease PH of Bacillus mycoides (strain KBAB4) (Bacillus weihenstephanensis).